Consider the following 301-residue polypeptide: Fatty acid elongase 3 (301 aa).

A run of 7 helical transmembrane segments spans residues Val-31–Met-51, Ile-64–Tyr-84, Ala-122–Leu-142, Val-161–Val-181, Gly-187–Val-207, Phe-219–Cys-239, and Phe-257–Phe-277. Residues His-165–His-169 carry the HxxHH motif motif. The active-site Nucleophile is the His-168.

This sequence belongs to the ELO family.

It localises to the endoplasmic reticulum membrane. The enzyme catalyses an acyl-CoA + malonyl-CoA + H(+) = a 3-oxoacyl-CoA + CO2 + CoA. The protein operates within lipid metabolism; fatty acid biosynthesis. Functionally, involved in the synthesis of fatty acids. Elongates C14 fatty acids to C18. The polypeptide is Fatty acid elongase 3 (Trypanosoma brucei brucei (strain 927/4 GUTat10.1)).